A 454-amino-acid polypeptide reads, in one-letter code: Bifunctional protein GlmU (454 aa).

The interval 1 to 228 (MTLPLHVVIL…PQHVEGANDP (228 aa)) is pyrophosphorylase. Residues 10-13 (LAAG), Lys-24, Gln-76, 81-82 (GT), 103-105 (YGD), Gly-138, Glu-153, Asn-168, and Asn-226 contribute to the UDP-N-acetyl-alpha-D-glucosamine site. Asp-105 provides a ligand contact to Mg(2+). Position 226 (Asn-226) interacts with Mg(2+). A linker region spans residues 229 to 249 (WQLAQLERAWQLRAARTLCLQ). The N-acetyltransferase stretch occupies residues 250-454 (GVRMADPARV…IEGWKRPTKK (205 aa)). UDP-N-acetyl-alpha-D-glucosamine is bound by residues Arg-332 and Lys-350. Catalysis depends on His-362, which acts as the Proton acceptor. Residues Tyr-365 and Asn-376 each coordinate UDP-N-acetyl-alpha-D-glucosamine. Acetyl-CoA-binding positions include Ala-379, 385-386 (NY), Ser-404, Ala-422, and Arg-439.

This sequence in the N-terminal section; belongs to the N-acetylglucosamine-1-phosphate uridyltransferase family. It in the C-terminal section; belongs to the transferase hexapeptide repeat family. Homotrimer. The cofactor is Mg(2+).

It is found in the cytoplasm. It carries out the reaction alpha-D-glucosamine 1-phosphate + acetyl-CoA = N-acetyl-alpha-D-glucosamine 1-phosphate + CoA + H(+). The enzyme catalyses N-acetyl-alpha-D-glucosamine 1-phosphate + UTP + H(+) = UDP-N-acetyl-alpha-D-glucosamine + diphosphate. Its pathway is nucleotide-sugar biosynthesis; UDP-N-acetyl-alpha-D-glucosamine biosynthesis; N-acetyl-alpha-D-glucosamine 1-phosphate from alpha-D-glucosamine 6-phosphate (route II): step 2/2. The protein operates within nucleotide-sugar biosynthesis; UDP-N-acetyl-alpha-D-glucosamine biosynthesis; UDP-N-acetyl-alpha-D-glucosamine from N-acetyl-alpha-D-glucosamine 1-phosphate: step 1/1. It functions in the pathway bacterial outer membrane biogenesis; LPS lipid A biosynthesis. In terms of biological role, catalyzes the last two sequential reactions in the de novo biosynthetic pathway for UDP-N-acetylglucosamine (UDP-GlcNAc). The C-terminal domain catalyzes the transfer of acetyl group from acetyl coenzyme A to glucosamine-1-phosphate (GlcN-1-P) to produce N-acetylglucosamine-1-phosphate (GlcNAc-1-P), which is converted into UDP-GlcNAc by the transfer of uridine 5-monophosphate (from uridine 5-triphosphate), a reaction catalyzed by the N-terminal domain. The chain is Bifunctional protein GlmU from Xanthomonas euvesicatoria pv. vesicatoria (strain 85-10) (Xanthomonas campestris pv. vesicatoria).